The primary structure comprises 1110 residues: Isoleucine--tRNA ligase (1110 aa).

Positions 47 to 57 (PSANGTPGIHH) match the 'HIGH' region motif. Residues 658–662 (KMSKR) carry the 'KMSKS' region motif. ATP is bound at residue K661.

This sequence belongs to the class-I aminoacyl-tRNA synthetase family. IleS type 2 subfamily. In terms of assembly, monomer. Zn(2+) is required as a cofactor.

It localises to the cytoplasm. The catalysed reaction is tRNA(Ile) + L-isoleucine + ATP = L-isoleucyl-tRNA(Ile) + AMP + diphosphate. Catalyzes the attachment of isoleucine to tRNA(Ile). As IleRS can inadvertently accommodate and process structurally similar amino acids such as valine, to avoid such errors it has two additional distinct tRNA(Ile)-dependent editing activities. One activity is designated as 'pretransfer' editing and involves the hydrolysis of activated Val-AMP. The other activity is designated 'posttransfer' editing and involves deacylation of mischarged Val-tRNA(Ile). The polypeptide is Isoleucine--tRNA ligase (Cytophaga hutchinsonii (strain ATCC 33406 / DSM 1761 / CIP 103989 / NBRC 15051 / NCIMB 9469 / D465)).